The chain runs to 631 residues: MNRLGRLPLPLPPSVCLFCQSRATTPLPPSLQATRSMATARLRRRVARMTLSPDVAKPSVVKKTRGDKERFGPFAGMNQTEARIRDKPRTRSRAAQKRSGEPEEDSQKESPLYKALKMQTALAPIPYGRRAAIKAKIADITSFDQFQLLPVVRNSISSQALPGLVDVTPTPIQRLAIPRLLEEPKTEKKPTKADDDEPQYDQYLLAAETGSGKTLAYLLPVVDAVKREEARDKELEKKEQEEKAREREEKLKNRAFDIEPEIPPLSNAGRPRAIILVPTSELVAQVGVKVKALSHTVKYRSGMISSNLTPRRIKNTLFHPDGIDILVATPHLLASIAKTEPYVLSRVSHLVLDEADSLLDRSFAPTTTEIISKAAPSLRKLILCSATIPRSLDNLLRKRYPDIKRLTTPNLHAIPRRVQLGVVDIEKDPYRGNRSLACADVIWSIGKAGDAESEGPYASYVAPKTKKILVFVNEREEADEVAQFLRSKGIDAQSLSRDSDARKQEEILAEFTEAPPPPTPDEILLAQKQRRHEDAIPFEMPQKTNQDSSRRLANTKVLVTTDLASRGIDTLAVKTVILYHVPHTTIDFIHRLGRLGRMGKRGRGVVLVGKKDRKDVVKEVREGMFRGQALI.

Residues 1–45 (MNRLGRLPLPLPPSVCLFCQSRATTPLPPSLQATRSMATARLRRR) constitute a mitochondrion transit peptide. The disordered stretch occupies residues 68 to 111 (KERFGPFAGMNQTEARIRDKPRTRSRAAQKRSGEPEEDSQKESP). The segment covering 98-108 (RSGEPEEDSQK) has biased composition (basic and acidic residues). The Q motif signature appears at 141 to 174 (TSFDQFQLLPVVRNSISSQALPGLVDVTPTPIQR). The segment covering 180 to 193 (LLEEPKTEKKPTKA) has biased composition (basic and acidic residues). Positions 180 to 199 (LLEEPKTEKKPTKADDDEPQ) are disordered. Residues 194–406 (DDDEPQYDQY…RKRYPDIKRL (213 aa)) form the Helicase ATP-binding domain. ATP is bound at residue 207–214 (AETGSGKT). The segment at 229–249 (EARDKELEKKEQEEKAREREE) is disordered. The DEAD box motif lies at 353–356 (DEAD). The Helicase C-terminal domain occupies 455-631 (GPYASYVAPK…EGMFRGQALI (177 aa)).

The protein belongs to the DEAD box helicase family. MRH4 subfamily.

It is found in the mitochondrion. It catalyses the reaction ATP + H2O = ADP + phosphate + H(+). ATP-binding RNA helicase involved in mitochondrial RNA metabolism. Required for maintenance of mitochondrial DNA. This is ATP-dependent RNA helicase mrh4, mitochondrial (mrh4) from Neosartorya fischeri (strain ATCC 1020 / DSM 3700 / CBS 544.65 / FGSC A1164 / JCM 1740 / NRRL 181 / WB 181) (Aspergillus fischerianus).